The following is a 904-amino-acid chain: Toll-like receptor 3 (904 aa).

A signal peptide spans 1-26; it reads MSRPLPYHIHFFSGLLTCWILCTSSA. The LRRNT domain occupies 27 to 52; the sequence is HKCTVRHEVADCSHLKLTQIPDDLPT. Over 27 to 705 the chain is Lumenal; that stretch reads HKCTVRHEVA…PCKDSAPFEL (679 aa). Cysteines 29 and 38 form a disulfide. Asparagine 53, asparagine 58, and asparagine 71 each carry an N-linked (GlcNAc...) asparagine glycan. LRR repeat units follow at residues 53 to 74, 77 to 98, 101 to 122, 125 to 146, 149 to 170, and 173 to 194; these read NITVLNLTHNQLRRLPPANFTR, QLTTLDGGFNSISKLEPELCQS, WLEILNLQHNEISQLSDKTFIF, NLTELHLMSNSIQKIKNDPFKN, NLIKLDLSHNGLSSTKLGTQLQ, and NLQELLLSNNKISSLTPGEFDF. Cysteine 96 and cysteine 123 form a disulfide bridge. Asparagine 125 carries N-linked (GlcNAc...) asparagine glycosylation. An N-linked (GlcNAc...) asparagine glycan is attached at asparagine 197. LRR repeat units lie at residues 199 to 220 and 223 to 245; these read SLKRLELSSNQIKEFSPGCFHT and ELSGLSLNNAKLSPSLTEKLCLE. Asparagine 248, asparagine 253, asparagine 276, and asparagine 292 each carry an N-linked (GlcNAc...) asparagine glycan. LRR repeat units follow at residues 250-271, 276-297, 300-321, 324-345, 357-378, 381-401, 409-430, 433-455, 466-487, 508-529, 532-553, 564-585, 588-609, and 612-633; these read SIENLSLSSNQLDTISHTTFDG, NLTTLDLSRNSLRVMGNDSFAW, HLEYLSLEYNNIEHLSSRSFYG, NLRRLDLRRSFTRQSISLTSLP, CLEYLNMDDNNFPGIKRNTFTG, RLKFLSLSNSFSSLRTLTNET, PLLLLDLTKNKISKIQSGAFSW, HLEVLDLGLNEIGQELTGQEWRG, YNKYLELTTNSFTSVPSLQRLM, NLVILDLSNNNIANINDELLKG, KLEILDLQHNNLARLWKHANPG, HLHILNLGSNGFDEIPVEAFKD, ELKSIDLGMNNLNILPQSVFDN, and SLKSLSLQKNLITSVQKTVFGP. N-linked (GlcNAc...) asparagine glycosylation occurs at asparagine 399. 3 N-linked (GlcNAc...) asparagine glycosylation sites follow: asparagine 637, asparagine 663, and asparagine 668. One can recognise an LRRCT domain in the interval 646-699; that stretch reads NPFDCTCESIAWFVNWINITHTNISELSNHYLCNTPPQYHGYPVMLFDVSPCKD. Intrachain disulfides connect cysteine 650/cysteine 678 and cysteine 652/cysteine 697. The helical transmembrane segment at 706–726 threads the bilayer; sequence LFMININILLIFIFIVLLIHF. Residues 727-904 lie on the Cytoplasmic side of the membrane; the sequence is EGWRISFYWN…VALGSRNSAH (178 aa). A TIR domain is found at 754 to 897; it reads FEYAAYIIHA…AFHHKLKVAL (144 aa). The residue at position 759 (tyrosine 759) is a Phosphotyrosine. Residues lysine 765, lysine 812, and lysine 831 each participate in a glycyl lysine isopeptide (Lys-Gly) (interchain with G-Cter in ubiquitin) cross-link. The residue at position 858 (tyrosine 858) is a Phosphotyrosine.

It belongs to the Toll-like receptor family. In terms of assembly, monomer and homodimer; dimerization is triggered by ligand-binding, the signaling unit is composed of one ds-RNA of around 40 bp and two TLR3 molecules, and lateral clustering of signaling units along the length of the ds-RNA ligand is required for TLR3 signal transduction. Interacts (via transmembrane domain) with UNC93B1; the interaction is required for transport from the ER to the endosomes. Interacts with TICAM1 (via the TIR domain) in response to poly(I:C) and this interaction is enhanced in the presence of WDFY1. Interacts with SRC; upon binding of double-stranded RNA. The tyrosine-phosphorylated form (via TIR domain) interacts with WDFY1 (via WD repeat 2) in response to poly(I:C). TLR3 signaling requires a proteolytic cleavage mediated by cathepsins CTSB and CTSH, the cleavage occurs between amino acids 252 and 346. The cleaved form of TLR3 is the predominant form found in endosomes. In terms of processing, ubiquitinated by TRIM3; leading to recognition and sorting of polyubiquitinated TLR3 by the ESCRT complexes. Ubiquitinated by ZNRF1 via 'Lys-63'-linked ubiquitin chains; leading to TLR3 lysosomal trafficking and degradation. Ubiquitinated by RNF170 at Lys-765 via 'Lys-48'-linked ubiquitin chains; leading to TLR3 proteasomal degradation.

Its subcellular location is the endoplasmic reticulum membrane. It is found in the endosome membrane. The protein resides in the early endosome. Functionally, key component of innate and adaptive immunity. TLRs (Toll-like receptors) control host immune response against pathogens through recognition of molecular patterns specific to microorganisms. TLR3 is a nucleotide-sensing TLR which is activated by double-stranded RNA, a sign of viral infection. Acts via the adapter TRIF/TICAM1, leading to NF-kappa-B activation, IRF3 nuclear translocation, cytokine secretion and the inflammatory response. This chain is Toll-like receptor 3 (TLR3), found in Bos taurus (Bovine).